Consider the following 157-residue polypeptide: uncharacterized protein (157 aa).

Lys-115 participates in a covalent cross-link: Isoglutamyl lysine isopeptide (Lys-Gln) (interchain with Q-Cter in protein Pup).

This is an uncharacterized protein from Mycolicibacterium smegmatis (strain ATCC 700084 / mc(2)155) (Mycobacterium smegmatis).